We begin with the raw amino-acid sequence, 148 residues long: 3-dehydroquinate dehydratase (148 aa).

The Proton acceptor role is filled by Tyr24. Residues Asn75, His81, and Asp88 each contribute to the substrate site. Residue His101 is the Proton donor of the active site. Substrate is bound by residues 102 to 103 (LS) and Arg112.

The protein belongs to the type-II 3-dehydroquinase family. As to quaternary structure, homododecamer.

The enzyme catalyses 3-dehydroquinate = 3-dehydroshikimate + H2O. Its pathway is metabolic intermediate biosynthesis; chorismate biosynthesis; chorismate from D-erythrose 4-phosphate and phosphoenolpyruvate: step 3/7. Its function is as follows. Catalyzes a trans-dehydration via an enolate intermediate. This is 3-dehydroquinate dehydratase from Rhizobium meliloti (strain 1021) (Ensifer meliloti).